The following is a 289-amino-acid chain: UTP--glucose-1-phosphate uridylyltransferase 2 (289 aa).

It belongs to the UDPGP type 2 family.

The enzyme catalyses alpha-D-glucose 1-phosphate + UTP + H(+) = UDP-alpha-D-glucose + diphosphate. The protein operates within glycolipid metabolism; diglucosyl-diacylglycerol biosynthesis. Its function is as follows. Catalyzes the formation of UDP-glucose from glucose-1-phosphate and UTP. This is an intermediate step in the biosynthesis of diglucosyl-diacylglycerol (Glc2-DAG), i.e. a glycolipid found in the membrane, which is also used as a membrane anchor for lipoteichoic acid (LTA). The chain is UTP--glucose-1-phosphate uridylyltransferase 2 (gtaB2) from Staphylococcus saprophyticus subsp. saprophyticus (strain ATCC 15305 / DSM 20229 / NCIMB 8711 / NCTC 7292 / S-41).